The chain runs to 398 residues: Neuroplastin (398 aa).

The N-terminal stretch at 1 to 28 (MSGSSLPSALALSLLLVSGSLLPGPGAA) is a signal peptide. Ig-like domains follow at residues 29-134 (QNAG…PSIT), 148-235 (PRIV…IEVK), and 238-329 (PDIT…SVVT). The Extracellular segment spans residues 29–339 (QNAGFVKSPM…VLRVRSHLAP (311 aa)). Cysteine 52 and cysteine 116 form a disulfide bridge. The interval 149-161 (RIVTSEEVIIRDS) is narpin; mediates binding with FGFR1 and has antidepressant-like activity. The cysteines at positions 170 and 218 are disulfide-linked. N-linked (GlcNAc...) asparagine glycosylation is found at asparagine 171, asparagine 197, asparagine 229, asparagine 284, asparagine 296, and asparagine 317. The cysteines at positions 259 and 316 are disulfide-linked. Residues 340-360 (LWPFLGILAEIIILVVIIVVY) form a helical membrane-spanning segment. The Cytoplasmic segment spans residues 361–398 (EKRKRPDEVPDDDEPAGPMKTNSTNNHKDKNLRQRNTN). The tract at residues 365 to 398 (RPDEVPDDDEPAGPMKTNSTNNHKDKNLRQRNTN) is disordered.

As to quaternary structure, interacts with ATP2B1; this interaction stabilizes ATP2B1 and increases ATPase activity; this interaction controls T cell calcium homeostasis following T cell activation. Interacts with XKR8; promoting its localization at the cell membrane. Isoform 1 is ubiquitously expressed. Isoform 2 is expressed in brain cortex and cerebellum (at protein level).

The protein resides in the cell membrane. The protein localises to the postsynaptic density. Probable homophilic and heterophilic cell adhesion molecule involved in long term potentiation at hippocampal excitatory synapses through activation of p38MAPK. May also regulate neurite outgrowth by activating the FGFR1 signaling pathway. May play a role in synaptic plasticity. Also acts as a chaperone for ATP2B1; stabilizes ATP2B1 and increases its ATPase activity. Promotes localization of XKR8 at the cell membrane. This Homo sapiens (Human) protein is Neuroplastin (NPTN).